The primary structure comprises 593 residues: Uroporphyrinogen-III C-methyltransferase (593 aa).

The segment at Glu-278–Asn-303 is disordered.

This sequence belongs to the precorrin methyltransferase family.

The catalysed reaction is uroporphyrinogen III + 2 S-adenosyl-L-methionine = precorrin-2 + 2 S-adenosyl-L-homocysteine + H(+). Functionally, siroheme synthase involved in methionine biosynthesis. The chain is Uroporphyrinogen-III C-methyltransferase from Saccharomyces cerevisiae (strain ATCC 204508 / S288c) (Baker's yeast).